We begin with the raw amino-acid sequence, 201 residues long: LexA repressor (201 aa).

Positions 28–48 (LREIAAKLGISGTLGVMKHLE) form a DNA-binding region, H-T-H motif. Active-site for autocatalytic cleavage activity residues include Ser120 and Lys157.

It belongs to the peptidase S24 family. Homodimer.

It carries out the reaction Hydrolysis of Ala-|-Gly bond in repressor LexA.. Functionally, represses a number of genes involved in the response to DNA damage (SOS response), including recA and lexA. In the presence of single-stranded DNA, RecA interacts with LexA causing an autocatalytic cleavage which disrupts the DNA-binding part of LexA, leading to derepression of the SOS regulon and eventually DNA repair. The chain is LexA repressor from Geobacter sp. (strain M21).